A 126-amino-acid chain; its full sequence is Large ribosomal subunit protein bL12 (126 aa).

This sequence belongs to the bacterial ribosomal protein bL12 family. Homodimer. Part of the ribosomal stalk of the 50S ribosomal subunit. Forms a multimeric L10(L12)X complex, where L10 forms an elongated spine to which 2 to 4 L12 dimers bind in a sequential fashion. Binds GTP-bound translation factors.

In terms of biological role, forms part of the ribosomal stalk which helps the ribosome interact with GTP-bound translation factors. Is thus essential for accurate translation. In Teredinibacter turnerae (strain ATCC 39867 / T7901), this protein is Large ribosomal subunit protein bL12.